Reading from the N-terminus, the 275-residue chain is MANYTAADVKRLRELTGSGMMACKNALAEAEGDFDKAVEQLRIKGAKDVGKRAERTTAEGLVVSKDGVLLELDCETDFVAKNEDFLKLAESIVTVAAAAKPADVDALKALELDGKTVDTVIQEQSAKIGEKLVLSKIASFDGPVAVYLHKRSADLPPAVGVLVEYTGEGDAAAEAARGAAMQVAALKAKYVTRDEVPEDIVANERHIAEETARAEGKPEQALPKIIEGRVNGYFKDVVLTEQSSVQDSKKSVKAILDEAGVTIKRFVRFEVGASS.

Positions 76–79 are involved in Mg(2+) ion dislocation from EF-Tu; the sequence is TDFV.

The protein belongs to the EF-Ts family.

Its subcellular location is the cytoplasm. Associates with the EF-Tu.GDP complex and induces the exchange of GDP to GTP. It remains bound to the aminoacyl-tRNA.EF-Tu.GTP complex up to the GTP hydrolysis stage on the ribosome. This is Elongation factor Ts from Rhodococcus opacus (strain B4).